Here is a 303-residue protein sequence, read N- to C-terminus: Probable alpha-L-glutamate ligase (303 aa).

Residues 104–287 form the ATP-grasp domain; that stretch reads LQLLAREGID…IAGMMIEFIE (184 aa). ATP-binding positions include Lys-141, 178 to 179, Asp-187, and 211 to 213; these read EY and RSN. Mg(2+) contacts are provided by Asp-248, Glu-260, and Asn-262. Asp-248, Glu-260, and Asn-262 together coordinate Mn(2+).

The protein belongs to the RimK family. It depends on Mg(2+) as a cofactor. Mn(2+) is required as a cofactor.

This is Probable alpha-L-glutamate ligase from Pectobacterium carotovorum subsp. carotovorum (strain PC1).